A 619-amino-acid chain; its full sequence is Alpha-(1,6)-fucosyltransferase (619 aa).

Residues 1 to 17 (MLLVRQLFGASANSWAR) are Cytoplasmic-facing. Residues 18–38 (ALIIFVLAWIGLVYVFVVKLT) form a helical; Signal-anchor for type II membrane protein membrane-spanning segment. At 39-619 (NTQGQQAAGE…TAKLPLYAGI (581 aa)) the chain is on the lumenal side. Disulfide bonds link Cys253–Cys315, Cys261–Cys279, and Cys267–Cys271. The GT23 domain occupies 255–539 (NARKLVCKLN…PDAAHRFKSL (285 aa)). The SH3-binding signature appears at 345 to 351 (PRPPYLP). Residues 411 to 412 (RR) are important for donor substrate binding. The cysteines at positions 511 and 518 are disulfide-linked. One can recognise an SH3 domain in the interval 548–609 (QNAHNRRVVI…PSFKVEEKVD (62 aa)).

This sequence belongs to the glycosyltransferase 23 family. It depends on Mn(2+) as a cofactor. Mg(2+) serves as cofactor.

The protein localises to the golgi apparatus. Its subcellular location is the golgi stack membrane. The catalysed reaction is N(4)-{beta-D-GlcNAc-(1-&gt;2)-alpha-D-Man-(1-&gt;3)-[beta-D-GlcNAc-(1-&gt;2)-alpha-D-Man-(1-&gt;6)]-beta-D-Man-(1-&gt;4)-beta-D-GlcNAc-(1-&gt;4)-beta-D-GlcNAc}-L-asparaginyl-[protein] + GDP-beta-L-fucose = an N(4)-{beta-D-GlcNAc-(1-&gt;2)-alpha-D-Man-(1-&gt;3)-[beta-D-GlcNAc-(1-&gt;2)-alpha-D-Man-(1-&gt;6)]-beta-D-Man-(1-&gt;4)-beta-D-GlcNAc-(1-&gt;4)-[alpha-L-Fuc-(1-&gt;6)]-beta-D-GlcNAc}-L-asparaginyl-[protein] + GDP + H(+). The protein operates within protein modification; protein glycosylation. Catalyzes the addition of fucose in alpha 1-6 linkage to the first GlcNAc residue, next to the peptide chains in N-glycans. The addition is prevented if the GlcNAc residue is already fucosylated. The chain is Alpha-(1,6)-fucosyltransferase (FucT6) from Drosophila melanogaster (Fruit fly).